Consider the following 408-residue polypeptide: MAKYLIRARIEIDGVVEKHDIIGAIFGQTEGLFGNEFDLRVLQDKGRIGRIQVNTKTQGSKTTGEILIPSNLDRVETALLAALIETVDKVGPYDASISIVDIVDLRMEKIKKIMERTVEILRRWGKEKTPDVKELIKSIQEYLKVPEPVSYGPEELPAGPDVDKAEEIIIVEGRADVINLLRYGYTNIIALGGARRVPDTIKKLAELKKTTLFVDGDHGGDLIMKEVLRNAKIDYIARAPPGREVEELSSREIEEALKKKIEIFQYLEEQVKQGNKEAQLLIQIQRRLHKLPEEVVKPPEKVAKEITETLSLPVKLIEDIKSLYGTLEAIFYSSQWDQVKRIPVRDLVSEIQASEPEKIHAIVFDGIITQRLIDAVVEKRVKILIGARLGKITFKTPELTILTFNELA.

The Toprim domain maps to 166–241; that stretch reads EEIIIVEGRA…KIDYIARAPP (76 aa). Mg(2+)-binding residues include glutamate 172, aspartate 215, and aspartate 217.

It belongs to the archaeal DnaG primase family. Forms a ternary complex with MCM helicase and DNA. Component of the archaeal exosome complex. Requires Mg(2+) as cofactor.

It catalyses the reaction ssDNA + n NTP = ssDNA/pppN(pN)n-1 hybrid + (n-1) diphosphate.. RNA polymerase that catalyzes the synthesis of short RNA molecules used as primers for DNA polymerase during DNA replication. Also part of the exosome, which is a complex involved in RNA degradation. Acts as a poly(A)-binding protein that enhances the interaction between heteromeric, adenine-rich transcripts and the exosome. The protein is DNA primase DnaG of Desulfurococcus amylolyticus (strain DSM 18924 / JCM 16383 / VKM B-2413 / 1221n) (Desulfurococcus kamchatkensis).